The chain runs to 253 residues: Probable transcriptional regulatory protein Tery_2125 (253 aa).

Belongs to the TACO1 family.

Its subcellular location is the cytoplasm. In Trichodesmium erythraeum (strain IMS101), this protein is Probable transcriptional regulatory protein Tery_2125.